The chain runs to 199 residues: Thymidine kinase (199 aa).

ATP contacts are provided by residues 15 to 22 (GSMFSGKS) and 88 to 91 (DEVQ). E89 (proton acceptor) is an active-site residue. Zn(2+) contacts are provided by C145, C148, C183, and H186.

It belongs to the thymidine kinase family. Homotetramer.

It is found in the cytoplasm. The enzyme catalyses thymidine + ATP = dTMP + ADP + H(+). The polypeptide is Thymidine kinase (Staphylococcus epidermidis (strain ATCC 12228 / FDA PCI 1200)).